Consider the following 343-residue polypeptide: Uroporphyrinogen decarboxylase (343 aa).

Residues 26–30 (RQAGR), aspartate 75, tyrosine 150, serine 205, and histidine 319 contribute to the substrate site.

This sequence belongs to the uroporphyrinogen decarboxylase family. Homodimer.

It is found in the cytoplasm. The enzyme catalyses uroporphyrinogen III + 4 H(+) = coproporphyrinogen III + 4 CO2. The protein operates within porphyrin-containing compound metabolism; protoporphyrin-IX biosynthesis; coproporphyrinogen-III from 5-aminolevulinate: step 4/4. In terms of biological role, catalyzes the decarboxylation of four acetate groups of uroporphyrinogen-III to yield coproporphyrinogen-III. The protein is Uroporphyrinogen decarboxylase of Syntrophotalea carbinolica (strain DSM 2380 / NBRC 103641 / GraBd1) (Pelobacter carbinolicus).